Consider the following 320-residue polypeptide: Endochitinase (320 aa).

The N-terminal stretch at 1–23 (MKRTLKVSFFILCLLPLFLGSKA) is a signal peptide. The 41-residue stretch at 24–64 (EQCGSQAGGAVCPNGLCCSKFGFCGSTDPYCGDGCQSQCKS) folds into the Chitin-binding type-1 domain. Intrachain disulfides connect cysteine 26–cysteine 41, cysteine 35–cysteine 47, cysteine 40–cysteine 54, cysteine 58–cysteine 62, cysteine 101–cysteine 163, cysteine 175–cysteine 182, and cysteine 281–cysteine 313. The Proton donor role is filled by glutamate 145.

Belongs to the glycosyl hydrolase 19 family. Chitinase class I subfamily.

It carries out the reaction Random endo-hydrolysis of N-acetyl-beta-D-glucosaminide (1-&gt;4)-beta-linkages in chitin and chitodextrins.. Its function is as follows. Defense against chitin-containing fungal pathogens. This is Endochitinase from Pisum sativum (Garden pea).